A 376-amino-acid chain; its full sequence is Chaperone protein DnaJ (376 aa).

In terms of domain architecture, J spans D5–G70. Residues G137–V215 form a CR-type zinc finger. 8 residues coordinate Zn(2+): C150, C153, C167, C170, C189, C192, C203, and C206. CXXCXGXG motif repeat units follow at residues C150–G157, C167–G174, C189–G196, and C203–G210.

This sequence belongs to the DnaJ family. In terms of assembly, homodimer. Requires Zn(2+) as cofactor.

It localises to the cytoplasm. Functionally, participates actively in the response to hyperosmotic and heat shock by preventing the aggregation of stress-denatured proteins and by disaggregating proteins, also in an autonomous, DnaK-independent fashion. Unfolded proteins bind initially to DnaJ; upon interaction with the DnaJ-bound protein, DnaK hydrolyzes its bound ATP, resulting in the formation of a stable complex. GrpE releases ADP from DnaK; ATP binding to DnaK triggers the release of the substrate protein, thus completing the reaction cycle. Several rounds of ATP-dependent interactions between DnaJ, DnaK and GrpE are required for fully efficient folding. Also involved, together with DnaK and GrpE, in the DNA replication of plasmids through activation of initiation proteins. In Nitratidesulfovibrio vulgaris (strain ATCC 29579 / DSM 644 / CCUG 34227 / NCIMB 8303 / VKM B-1760 / Hildenborough) (Desulfovibrio vulgaris), this protein is Chaperone protein DnaJ.